We begin with the raw amino-acid sequence, 579 residues long: Aspartate--tRNA(Asp/Asn) ligase (579 aa).

E171 serves as a coordination point for L-aspartate. Positions 195–198 (QLFK) are aspartate. R217 contributes to the L-aspartate binding site. ATP contacts are provided by residues 217 to 219 (RDE) and Q226. H444 serves as a coordination point for L-aspartate. E475 is an ATP binding site. R482 is an L-aspartate binding site. 527–530 (GLDR) is a binding site for ATP.

It belongs to the class-II aminoacyl-tRNA synthetase family. Type 1 subfamily. As to quaternary structure, homodimer.

It is found in the cytoplasm. The enzyme catalyses tRNA(Asx) + L-aspartate + ATP = L-aspartyl-tRNA(Asx) + AMP + diphosphate. Aspartyl-tRNA synthetase with relaxed tRNA specificity since it is able to aspartylate not only its cognate tRNA(Asp) but also tRNA(Asn). Reaction proceeds in two steps: L-aspartate is first activated by ATP to form Asp-AMP and then transferred to the acceptor end of tRNA(Asp/Asn). The chain is Aspartate--tRNA(Asp/Asn) ligase from Thermotoga maritima (strain ATCC 43589 / DSM 3109 / JCM 10099 / NBRC 100826 / MSB8).